A 449-amino-acid polypeptide reads, in one-letter code: Glucose-6-phosphate isomerase (449 aa).

Glutamate 290 serves as the catalytic Proton donor. Residues histidine 311 and lysine 425 contribute to the active site.

Belongs to the GPI family.

The protein localises to the cytoplasm. It carries out the reaction alpha-D-glucose 6-phosphate = beta-D-fructose 6-phosphate. Its pathway is carbohydrate biosynthesis; gluconeogenesis. It functions in the pathway carbohydrate degradation; glycolysis; D-glyceraldehyde 3-phosphate and glycerone phosphate from D-glucose: step 2/4. In terms of biological role, catalyzes the reversible isomerization of glucose-6-phosphate to fructose-6-phosphate. In Clostridioides difficile (strain 630) (Peptoclostridium difficile), this protein is Glucose-6-phosphate isomerase.